We begin with the raw amino-acid sequence, 142 residues long: Putative pre-16S rRNA nuclease (142 aa).

Belongs to the YqgF nuclease family.

The protein localises to the cytoplasm. In terms of biological role, could be a nuclease involved in processing of the 5'-end of pre-16S rRNA. In Lactobacillus helveticus (strain DPC 4571), this protein is Putative pre-16S rRNA nuclease.